Reading from the N-terminus, the 92-residue chain is MAACSRTQVISLYRMLIKESKKFPSYNYRTYALRRVKDSFRENLHVDNPKTLDMLLNQARENLAVIRRQVSIGQMYTAQRTIVEETGVHRDL.

The protein belongs to the complex I LYR family.

The protein is LYR motif-containing protein 4A (lyrm4a) of Salmo salar (Atlantic salmon).